Here is a 276-residue protein sequence, read N- to C-terminus: Extracellular metalloprotease 1 (276 aa).

An N-terminal signal peptide occupies residues 1–18; the sequence is MRVSVPVLALAFGSLAAA. His-191 provides a ligand contact to Zn(2+). Glu-192 is an active-site residue. His-195 is a binding site for Zn(2+). Residues 211–233 are disordered; the sequence is GDYVSDTPPQRSPSSGCPVGRDS. A disulfide bridge connects residues Cys-227 and Cys-253.

This sequence belongs to the peptidase M43B family.

The protein localises to the secreted. In terms of biological role, secreted metalloproteinase that allows assimilation of proteinaceous substrates. Pays a pivotal role as a pathogenicity determinant during infections and contributes to the ability of the pathogen to persist within the mammalian host. Digests an immunodominant cell surface antigen (SOWgp) and prevents host recognition of endospores during the phase of development when these fungal cells are most vulnerable to phagocytic cell defenses. The sequence is that of Extracellular metalloprotease 1 (MEP1) from Coccidioides posadasii (strain C735) (Valley fever fungus).